The sequence spans 539 residues: Lysophospholipid acyltransferase LPEAT2 (539 aa).

A helical transmembrane segment spans residues 93 to 113 (LVICLPIALIRLVLFAASLAV). The HXXXXD motif motif lies at 178 to 183 (HVSYIE). EF-hand domains follow at residues 426–455 (KRIF…VLTQ), 457–492 (LFKQ…TIPN), and 493–528 (LNKD…NPLL). Residues aspartate 470, aspartate 472, aspartate 474, tyrosine 476, glutamate 481, aspartate 506, aspartate 508, aspartate 510, arginine 512, and aspartate 517 each coordinate Ca(2+).

It belongs to the 1-acyl-sn-glycerol-3-phosphate acyltransferase family.

Its subcellular location is the golgi apparatus membrane. It is found in the late endosome membrane. The enzyme catalyses a 1-acyl-sn-glycero-3-phosphoethanolamine + an acyl-CoA = a 1,2-diacyl-sn-glycero-3-phosphoethanolamine + CoA. The catalysed reaction is a 1-acyl-sn-glycero-3-phosphocholine + an acyl-CoA = a 1,2-diacyl-sn-glycero-3-phosphocholine + CoA. It carries out the reaction a 1-acyl-sn-glycero-3-phospho-L-serine + an acyl-CoA = a 1,2-diacyl-sn-glycero-3-phospho-L-serine + CoA. Its pathway is lipid metabolism; phospholipid metabolism. Functionally, possesses acyl-CoA-dependent lysophospholipid acyltransferase activity with a subset of lysophospholipids as substrates. Exhibits strong acylation activity on lysophosphatidylethanolamine (LPE), and lower activity on lysophosphatidylcholine (LPC) and lysophosphatidylserine (LPS). Exhibits acylation activity on both LPE and LPC. Has a preference for 18:1-LPE over 16:0-LPE as acceptor. Palmitoyl-CoA (16:0-CoA) is a better acyl donor than oleoyl-CoA (18:1-CoA). Among several different acyl-CoA species the best acyl donor is eicosanoyl-CoA (20:0-CoA). Activity is calcium-independent. Its activity is essential for maintaining adequate levels of phosphatidylethanolamine (PE), LPE and LPC in the cells, which is crucial for plant growth regulation. This is Lysophospholipid acyltransferase LPEAT2 from Arabidopsis thaliana (Mouse-ear cress).